An 84-amino-acid polypeptide reads, in one-letter code: MPIIKSAIKRVKTTEKANAKNSSQLSKMRTAVKKFEKAKTAGADNVEQLFNEAVSAIDKAQSKGLIKANKAARDKSRMAARLAK.

Belongs to the bacterial ribosomal protein bS20 family.

Its function is as follows. Binds directly to 16S ribosomal RNA. This chain is Small ribosomal subunit protein bS20, found in Ligilactobacillus salivarius (strain UCC118) (Lactobacillus salivarius).